The primary structure comprises 376 residues: Quinolinate synthase (376 aa).

Positions 57 and 78 each coordinate iminosuccinate. Residue Cys123 participates in [4Fe-4S] cluster binding. Iminosuccinate is bound by residues 149-151 and Ser166; that span reads YAN. A [4Fe-4S] cluster-binding site is contributed by Cys210. Iminosuccinate is bound by residues 236–238 and Thr253; that span reads HPE. A [4Fe-4S] cluster-binding site is contributed by Cys307.

This sequence belongs to the quinolinate synthase family. Type 1 subfamily. [4Fe-4S] cluster is required as a cofactor.

The protein localises to the cytoplasm. The enzyme catalyses iminosuccinate + dihydroxyacetone phosphate = quinolinate + phosphate + 2 H2O + H(+). It participates in cofactor biosynthesis; NAD(+) biosynthesis; quinolinate from iminoaspartate: step 1/1. Functionally, catalyzes the condensation of iminoaspartate with dihydroxyacetone phosphate to form quinolinate. The polypeptide is Quinolinate synthase (Paraburkholderia phymatum (strain DSM 17167 / CIP 108236 / LMG 21445 / STM815) (Burkholderia phymatum)).